The sequence spans 333 residues: D-fructose 1,6-bisphosphatase class 2/sedoheptulose 1,7-bisphosphatase (333 aa).

The Mn(2+) site is built by aspartate 33, glutamate 57, aspartate 85, and glutamate 88. Residues 88-90 (EGT), tyrosine 119, 164-166 (RAR), and 186-188 (DGD) each bind substrate. Glutamate 213 contributes to the Mn(2+) binding site.

The protein belongs to the FBPase class 2 family. In terms of assembly, homotetramer. Mn(2+) serves as cofactor.

The catalysed reaction is beta-D-fructose 1,6-bisphosphate + H2O = beta-D-fructose 6-phosphate + phosphate. It catalyses the reaction D-sedoheptulose 1,7-bisphosphate + H2O = D-sedoheptulose 7-phosphate + phosphate. The protein operates within carbohydrate biosynthesis; Calvin cycle. Functionally, catalyzes the hydrolysis of fructose 1,6-bisphosphate (Fru 1,6-P2) and sedoheptulose 1,7-bisphosphate (Sed 1,7-P2) to fructose 6-phosphate and sedoheptulose 7-phosphate, respectively. This is D-fructose 1,6-bisphosphatase class 2/sedoheptulose 1,7-bisphosphatase from Prochlorococcus marinus subsp. pastoris (strain CCMP1986 / NIES-2087 / MED4).